The sequence spans 222 residues: Cytochrome b6 (222 aa).

The chain crosses the membrane as a helical span at residues 39-59 (IFYCLGGLTLTCFLIQFATGF). Tyrosine 41 contacts heme b. Cysteine 42 is a binding site for heme c. The heme b site is built by arginine 90, histidine 93, arginine 94, histidine 107, and arginine 110. Helical transmembrane passes span 97–117 (ASMM…TGGF), 123–143 (LTWV…VTGY), and 193–213 (LHTF…FLMI). The heme b site is built by histidine 194 and histidine 209. Arginine 214 and isoleucine 218 together coordinate heme c. Serine 219 is a binding site for heme b.

This sequence belongs to the cytochrome b family. PetB subfamily. As to quaternary structure, the 4 large subunits of the cytochrome b6-f complex are cytochrome b6, subunit IV (17 kDa polypeptide, PetD), cytochrome f and the Rieske protein, while the 4 small subunits are PetG, PetL, PetM and PetN. The complex functions as a dimer. It depends on heme b as a cofactor. Requires heme c as cofactor.

Its subcellular location is the cellular thylakoid membrane. Component of the cytochrome b6-f complex, which mediates electron transfer between photosystem II (PSII) and photosystem I (PSI), cyclic electron flow around PSI, and state transitions. This is Cytochrome b6 from Synechocystis sp. (strain ATCC 27184 / PCC 6803 / Kazusa).